The sequence spans 626 residues: ATP-dependent RNA helicase dbp-8 (626 aa).

The segment covering 1 to 25 (MPSATAAKAKKANANANLKSKVNKA) has biased composition (low complexity). The segment at 1–183 (MPSATAAKAK…ATPALPVPEP (183 aa)) is disordered. Over residues 40–98 (DESDFGSELDVEDESAASDEEDEDEDEDEHDLEEGVSDEGEGVSDEEEGVSDEDEDEEN) the composition is skewed to acidic residues. The span at 161-173 (KQAEAPKTEKTEE) shows a compositional bias: basic and acidic residues. Residues 195–223 (TTFDALNVRPWLVQSLANMAIKRPTGIQK) carry the Q motif motif. Positions 226-406 (IPEILKGRDC…ERPPIPGRAP (181 aa)) constitute a Helicase ATP-binding domain. Position 239-246 (239-246 (SRTGSGKT)) interacts with ATP. A DEAD box motif is present at residues 348 to 351 (DEAD). The Helicase C-terminal domain occupies 438–589 (YLHMFLLTPQ…GVNLETRVIR (152 aa)).

It belongs to the DEAD box helicase family. DDX49/DBP8 subfamily.

It localises to the nucleus. The protein localises to the nucleolus. The catalysed reaction is ATP + H2O = ADP + phosphate + H(+). In terms of biological role, ATP-binding RNA helicase involved in 40S ribosomal subunit biogenesis and is required for the normal formation of 18S rRNAs through pre-rRNA processing at A0, A1 and A2 sites. Required for vegetative growth. This chain is ATP-dependent RNA helicase dbp-8 (dbp-8), found in Neurospora crassa (strain ATCC 24698 / 74-OR23-1A / CBS 708.71 / DSM 1257 / FGSC 987).